A 262-amino-acid chain; its full sequence is MALGIRCFRLLHPAFSSYLADLSRPVSEVPMKTVRGRQRDHIQYSAHPAVPVRQFATKKAKAKGKGQPQARVNINTALVEDIISLEEVDEDMKSVMEALKDNFNKTLNIRTAPGSLDHITVVTADGKLALNQIGQISMKSPQLILVNMASFPECTAAAIKAIRESGMNLNPEVEGTLIRVPIPKVTREHREMLVKLAKQNTNKAKENLRKVRTNAMNKLKKSKDKTSEDTIRLIEKQISQMADDTVAELDRHLAAKTKELLG.

The N-terminal 55 residues, 1–55, are a transit peptide targeting the mitochondrion; it reads MALGIRCFRLLHPAFSSYLADLSRPVSEVPMKTVRGRQRDHIQYSAHPAVPVRQF.

This sequence belongs to the RRF family.

The protein localises to the mitochondrion. Functionally, responsible for the disassembly of ribosomes from messenger RNA at the termination of mitochondrial protein biosynthesis. Acts in collaboration with GFM2. Promotes mitochondrial ribosome recycling by dissolution of intersubunit contacts. This chain is Ribosome-recycling factor, mitochondrial (Mrrf), found in Rattus norvegicus (Rat).